The primary structure comprises 410 residues: LL-diaminopimelate aminotransferase (410 aa).

Substrate is bound by residues Tyr-15 and Gly-42. Pyridoxal 5'-phosphate contacts are provided by residues Tyr-72, 108 to 109 (AK), Tyr-132, Asn-187, Tyr-218, and 246 to 248 (SFS). Positions 109, 132, and 187 each coordinate substrate. N6-(pyridoxal phosphate)lysine is present on Lys-249. Pyridoxal 5'-phosphate is bound by residues Arg-257 and Asn-292. Residues Asn-292 and Arg-388 each contribute to the substrate site.

Belongs to the class-I pyridoxal-phosphate-dependent aminotransferase family. LL-diaminopimelate aminotransferase subfamily. Homodimer. Requires pyridoxal 5'-phosphate as cofactor.

It carries out the reaction (2S,6S)-2,6-diaminopimelate + 2-oxoglutarate = (S)-2,3,4,5-tetrahydrodipicolinate + L-glutamate + H2O + H(+). It functions in the pathway amino-acid biosynthesis; L-lysine biosynthesis via DAP pathway; LL-2,6-diaminopimelate from (S)-tetrahydrodipicolinate (aminotransferase route): step 1/1. In terms of biological role, involved in the synthesis of meso-diaminopimelate (m-DAP or DL-DAP), required for both lysine and peptidoglycan biosynthesis. Catalyzes the direct conversion of tetrahydrodipicolinate to LL-diaminopimelate. Is also able to catalyze the reverse reaction in vitro, i.e. the transamination of LL-diaminopimelate with 2-oxoglutarate to produce 2-oxo-6-aminopimelate (in equilibrium with tetrahydrodipicolinate) and glutamate. Has maximal aminotransferase activity using 2-oxoglutarate as an amino group acceptor, and cannot use oxaloacetate instead of 2-oxoglutarate, although 2-oxoadipate can substitute with 21% relative activity. Cannot use m-DAP, lysine or ornithine as the amino-group donor, when using 2-oxoglutarate as the amino-group acceptor. This is LL-diaminopimelate aminotransferase from Methanothermobacter thermautotrophicus (strain ATCC 29096 / DSM 1053 / JCM 10044 / NBRC 100330 / Delta H) (Methanobacterium thermoautotrophicum).